We begin with the raw amino-acid sequence, 545 residues long: Glucose-6-phosphate isomerase (545 aa).

Glu351 acts as the Proton donor in catalysis. Catalysis depends on residues His382 and Lys510.

Belongs to the GPI family.

The protein localises to the cytoplasm. It catalyses the reaction alpha-D-glucose 6-phosphate = beta-D-fructose 6-phosphate. It participates in carbohydrate biosynthesis; gluconeogenesis. The protein operates within carbohydrate degradation; glycolysis; D-glyceraldehyde 3-phosphate and glycerone phosphate from D-glucose: step 2/4. In terms of biological role, catalyzes the reversible isomerization of glucose-6-phosphate to fructose-6-phosphate. The chain is Glucose-6-phosphate isomerase from Helicobacter acinonychis (strain Sheeba).